A 343-amino-acid polypeptide reads, in one-letter code: Heat-inducible transcription repressor HrcA (343 aa).

The protein belongs to the HrcA family.

Negative regulator of class I heat shock genes (grpE-dnaK-dnaJ and groELS operons). Prevents heat-shock induction of these operons. This is Heat-inducible transcription repressor HrcA from Clostridium botulinum (strain Eklund 17B / Type B).